A 630-amino-acid polypeptide reads, in one-letter code: Putative F-box/LRR-repeat protein At3g49150 (630 aa).

An F-box domain is found at 15 to 63; it reads KDIISDLPEALICHILSFLPIEDSALTSVLSKKWQHLFAFRPNLEFDDA. LRR repeat units follow at residues 101–129, 152–178, 180–205, 228–253, 300–325, 337–362, 406–436, 437–465, and 567–590; these read CRDF…DLRC, RIET…YLNK, LLRH…FIMN, CEDV…VYHD, ISNV…QIPV, DQKA…IFDG, CDDY…KLFY, DTQI…FNAR, and DSSI…GLNW.

This Arabidopsis thaliana (Mouse-ear cress) protein is Putative F-box/LRR-repeat protein At3g49150.